Here is a 322-residue protein sequence, read N- to C-terminus: Transmembrane protein 171 (322 aa).

4 helical membrane-spanning segments follow: residues 22-42, 57-77, 112-132, and 159-179; these read IFFL…LSIF, IVLK…VILA, LIFG…GIWV, and FLSL…FFVV. The interval 223-322 is disordered; the sequence is PPPYFPESSA…LGAPSDASPP (100 aa). Positions 228 to 241 are enriched in low complexity; sequence PESSAAAPSPGANS. 2 stretches are compositionally biased toward polar residues: residues 242–267 and 279–289; these read LHQI…NQGA and ISGQGSSSERS.

Its subcellular location is the membrane. The chain is Transmembrane protein 171 (Tmem171) from Mus musculus (Mouse).